A 282-amino-acid polypeptide reads, in one-letter code: Shikimate dehydrogenase (NADP(+)) (282 aa).

Residues 15 to 17 (SKS) and Thr-62 contribute to the shikimate site. The active-site Proton acceptor is Lys-66. Asn-87 and Asp-103 together coordinate shikimate. NADP(+) is bound by residues 128–132 (GAGGA), 152–157 (NRTPAK), and Met-216. Position 218 (Tyr-218) interacts with shikimate. Position 240 (Gly-240) interacts with NADP(+).

It belongs to the shikimate dehydrogenase family. As to quaternary structure, homodimer.

The enzyme catalyses shikimate + NADP(+) = 3-dehydroshikimate + NADPH + H(+). It participates in metabolic intermediate biosynthesis; chorismate biosynthesis; chorismate from D-erythrose 4-phosphate and phosphoenolpyruvate: step 4/7. In terms of biological role, involved in the biosynthesis of the chorismate, which leads to the biosynthesis of aromatic amino acids. Catalyzes the reversible NADPH linked reduction of 3-dehydroshikimate (DHSA) to yield shikimate (SA). In Nitrosococcus oceani (strain ATCC 19707 / BCRC 17464 / JCM 30415 / NCIMB 11848 / C-107), this protein is Shikimate dehydrogenase (NADP(+)).